Consider the following 63-residue polypeptide: Cytochrome c oxidase subunit 5C (63 aa).

A helical membrane pass occupies residues 16–34 (VVKEIFIGLTLGLVAGGMW).

This sequence belongs to the cytochrome c oxidase subunit 5C family.

It is found in the mitochondrion inner membrane. This protein is one of the nuclear-coded polypeptide chains of cytochrome c oxidase, the terminal oxidase in mitochondrial electron transport. The protein is Cytochrome c oxidase subunit 5C (COX5C) of Hordeum vulgare (Barley).